Here is a 471-residue protein sequence, read N- to C-terminus: 6-phosphofructo-2-kinase/fructose-2,6-bisphosphatase 1 (471 aa).

Ser2 is modified (N-acetylserine). Residues 2 to 250 (SQEMGELTQT…VYYLMNIHVT (249 aa)) are 6-phosphofructo-2-kinase. The residue at position 33 (Ser33) is a Phosphoserine; by PKA. 49-57 (GLPARGKTY) contributes to the ATP binding site. Beta-D-fructose 6-phosphate is bound by residues Arg82 and Arg105. Residue Asp131 is part of the active site. Thr133 and Arg139 together coordinate beta-D-fructose 6-phosphate. Phosphoserine is present on Ser141. The active site involves Cys161. 170-175 (NIRQVK) is an ATP binding site. Positions 175, 196, and 200 each coordinate beta-D-fructose 6-phosphate. The fructose-2,6-bisphosphatase stretch occupies residues 251 to 471 (PRSIYLCRHG…EALDTVPAHY (221 aa)). Arg258 is a binding site for beta-D-fructose 2,6-bisphosphate. His259 acts as the Tele-phosphohistidine intermediate in catalysis. Beta-D-fructose 2,6-bisphosphate-binding residues include Asn265, Gly271, and Arg308. The active-site Proton donor/acceptor is Glu328. Beta-D-fructose 2,6-bisphosphate-binding residues include Tyr339, Arg353, Lys357, Tyr368, Gln394, and Arg398. Residue 350-353 (FALR) participates in ATP binding. Residues 394–398 (QAVMR) and Tyr430 each bind ATP.

In the C-terminal section; belongs to the phosphoglycerate mutase family. In terms of assembly, homodimer. Liver.

The enzyme catalyses beta-D-fructose 2,6-bisphosphate + H2O = beta-D-fructose 6-phosphate + phosphate. It carries out the reaction beta-D-fructose 6-phosphate + ATP = beta-D-fructose 2,6-bisphosphate + ADP + H(+). Phosphorylation at Ser-33 inhibits the kinase and activates the bisphosphatase. Synthesis and degradation of fructose 2,6-bisphosphate. In Bos taurus (Bovine), this protein is 6-phosphofructo-2-kinase/fructose-2,6-bisphosphatase 1.